The sequence spans 457 residues: Chromosomal replication initiator protein DnaA (457 aa).

Residues 1-90 (MAVSLWQQCI…RPSAKPQAPA (90 aa)) form a domain I, interacts with DnaA modulators region. Residues 79–120 (GSRPSAKPQAPAPAAVKAAAPQPKPGNSFVSQPEPAVSNHRS) form a disordered region. Over residues 84-99 (AKPQAPAPAAVKAAAP) the composition is skewed to low complexity. Positions 91–120 (PAAVKAAAPQPKPGNSFVSQPEPAVSNHRS) are domain II. The domain III, AAA+ region stretch occupies residues 121–337 (NINPTYQFDN…GALNRVIANA (217 aa)). 4 residues coordinate ATP: G165, G167, K168, and T169. The segment at 338–457 (NFTGRPITID…YANLIRTLSS (120 aa)) is domain IV, binds dsDNA.

This sequence belongs to the DnaA family. As to quaternary structure, oligomerizes as a right-handed, spiral filament on DNA at oriC.

The protein resides in the cytoplasm. Functionally, plays an essential role in the initiation and regulation of chromosomal replication. ATP-DnaA binds to the origin of replication (oriC) to initiate formation of the DNA replication initiation complex once per cell cycle. Binds the DnaA box (a 9 base pair repeat at the origin) and separates the double-stranded (ds)DNA. Forms a right-handed helical filament on oriC DNA; dsDNA binds to the exterior of the filament while single-stranded (ss)DNA is stabiized in the filament's interior. The ATP-DnaA-oriC complex binds and stabilizes one strand of the AT-rich DNA unwinding element (DUE), permitting loading of DNA polymerase. After initiation quickly degrades to an ADP-DnaA complex that is not apt for DNA replication. Binds acidic phospholipids. In Shewanella amazonensis (strain ATCC BAA-1098 / SB2B), this protein is Chromosomal replication initiator protein DnaA.